The sequence spans 417 residues: Exodeoxyribonuclease 7 large subunit (417 aa).

It belongs to the XseA family. Heterooligomer composed of large and small subunits.

It is found in the cytoplasm. The catalysed reaction is Exonucleolytic cleavage in either 5'- to 3'- or 3'- to 5'-direction to yield nucleoside 5'-phosphates.. Bidirectionally degrades single-stranded DNA into large acid-insoluble oligonucleotides, which are then degraded further into small acid-soluble oligonucleotides. The sequence is that of Exodeoxyribonuclease 7 large subunit from Corynebacterium glutamicum (strain ATCC 13032 / DSM 20300 / JCM 1318 / BCRC 11384 / CCUG 27702 / LMG 3730 / NBRC 12168 / NCIMB 10025 / NRRL B-2784 / 534).